Reading from the N-terminus, the 97-residue chain is Kunitz-type trypsin inhibitor 1 (97 aa).

Belongs to the protease inhibitor I3 (leguminous Kunitz-type inhibitor) family.

Exhibits Kunitz trypsin protease inhibitor activity. The sequence is that of Kunitz-type trypsin inhibitor 1 from Selenicereus costaricensis (Red-fleshed dragon fruit).